The primary structure comprises 450 residues: Beta-glucosidase (450 aa).

Glu-166 serves as the catalytic Proton donor. Glu-355 functions as the Nucleophile in the catalytic mechanism.

This sequence belongs to the glycosyl hydrolase 1 family.

It catalyses the reaction Hydrolysis of terminal, non-reducing beta-D-glucosyl residues with release of beta-D-glucose.. The protein is Beta-glucosidase (bglA) of Niallia circulans (Bacillus circulans).